The primary structure comprises 301 residues: Homeobox protein Hox-D13 (301 aa).

Disordered stretches follow at residues Met1–Gln20 and Gly55–Gly75. Gly residues predominate over residues Ser8–Pro18. A DNA-binding region (homeobox) is located at residues Gly234–Val293.

Belongs to the Abd-B homeobox family.

Its subcellular location is the nucleus. Functionally, sequence-specific transcription factor that binds gene promoters and activates their transcription. Part of a developmental regulatory system that provides cells with specific positional identities on the anterior-posterior axis. The protein is Homeobox protein Hox-D13 (HOXD13) of Gallus gallus (Chicken).